A 201-amino-acid polypeptide reads, in one-letter code: Putative ankyrin repeat protein YahD (201 aa).

6 ANK repeats span residues 5–34, 38–67, 71–100, 104–134, 138–172, and 176–201; these read NLPA…DINT, QGKT…DINK, TCLN…DLNC, FGGV…NVNQ, VGWT…SPHL, and YGKT…AAGA.

The sequence is that of Putative ankyrin repeat protein YahD (yahD) from Escherichia coli (strain K12).